We begin with the raw amino-acid sequence, 501 residues long: Aldehyde dehydrogenase 1A1 (501 aa).

Ser2 carries the N-acetylserine modification. N6-acetyllysine is present on residues Lys91 and Lys128. Residues 167–170 (IPWN), 193–196 (KPAE), 226–227 (GP), and 246–247 (GS) contribute to the NAD(+) site. Lys252 bears the N6-acetyllysine mark. Glu269 acts as the Proton acceptor in catalysis. 269 to 271 (ELG) is a binding site for NAD(+). Cys303 acts as the Nucleophile in catalysis. The interval 336–501 (LTPGINQGPQ…VAMKISQKNS (166 aa)) is mediates interaction with PRMT3. At Thr337 the chain carries Phosphothreonine. 349-353 (EQHDK) lines the NAD(+) pocket. 2 positions are modified to N6-acetyllysine: Lys353 and Lys367. 400 to 402 (EIF) serves as a coordination point for NAD(+). N6-acetyllysine is present on Lys410. Ser413 is subject to Phosphoserine. Residues Lys419, Lys435, and Lys495 each carry the N6-acetyllysine modification.

It belongs to the aldehyde dehydrogenase family. Homotetramer. Interacts with PRMT3; the interaction is direct, inhibits ALDH1A1 aldehyde dehydrogenase activity and is independent of the methyltransferase activity of PRMT3. Post-translationally, the N-terminus is blocked most probably by acetylation. Expressed in retina. Expressed in lens and cornea (at protein level). Expressed by midbrain dopamine neurons.

Its subcellular location is the cytoplasm. The protein resides in the cytosol. It is found in the cell projection. The protein localises to the axon. It catalyses the reaction an aldehyde + NAD(+) + H2O = a carboxylate + NADH + 2 H(+). The catalysed reaction is all-trans-retinal + NAD(+) + H2O = all-trans-retinoate + NADH + 2 H(+). The enzyme catalyses 9-cis-retinal + NAD(+) + H2O = 9-cis-retinoate + NADH + 2 H(+). It carries out the reaction 11-cis-retinal + NAD(+) + H2O = 11-cis-retinoate + NADH + 2 H(+). It catalyses the reaction 13-cis-retinal + NAD(+) + H2O = 13-cis-retinoate + NADH + 2 H(+). The catalysed reaction is 4-aminobutanal + NAD(+) + H2O = 4-aminobutanoate + NADH + 2 H(+). The enzyme catalyses 3-deoxyglucosone + NAD(+) + H2O = 2-dehydro-3-deoxy-D-gluconate + NADH + 2 H(+). It carries out the reaction (E)-4-hydroxynon-2-enal + NAD(+) + H2O = (E)-4-hydroxynon-2-enoate + NADH + 2 H(+). It catalyses the reaction malonaldehyde + NAD(+) + H2O = 3-oxopropanoate + NADH + 2 H(+). The catalysed reaction is hexanal + NAD(+) + H2O = hexanoate + NADH + 2 H(+). The enzyme catalyses propanal + NAD(+) + H2O = propanoate + NADH + 2 H(+). It carries out the reaction acetaldehyde + NAD(+) + H2O = acetate + NADH + 2 H(+). It catalyses the reaction benzaldehyde + NAD(+) + H2O = benzoate + NADH + 2 H(+). Its pathway is cofactor metabolism; retinol metabolism. The aminobutyraldehyde dehydrogenase activity is negatively regulated by ethanol in vivo. In terms of biological role, cytosolic dehydrogenase that catalyzes the irreversible oxidation of a wide range of aldehydes to their corresponding carboxylic acid. Functions downstream of retinol dehydrogenases and catalyzes the oxidation of retinaldehyde into retinoic acid, the second step in the oxidation of retinol/vitamin A into retinoic acid. This pathway is crucial to control the levels of retinol and retinoic acid, two important molecules which excess can be teratogenic and cytotoxic. Also oxidizes aldehydes resulting from lipid peroxidation like (E)-4-hydroxynon-2-enal/HNE, malonaldehyde and hexanal that form protein adducts and are highly cytotoxic. By participating for instance to the clearance of (E)-4-hydroxynon-2-enal/HNE in the lens epithelium prevents the formation of HNE-protein adducts and lens opacification. Also functions downstream of fructosamine-3-kinase in the fructosamine degradation pathway by catalyzing the oxidation of 3-deoxyglucosone, the carbohydrate product of fructosamine 3-phosphate decomposition, which is itself a potent glycating agent that may react with lysine and arginine side-chains of proteins. Also has an aminobutyraldehyde dehydrogenase activity and is probably part of an alternative pathway for the biosynthesis of GABA/4-aminobutanoate in midbrain, thereby playing a role in GABAergic synaptic transmission. This chain is Aldehyde dehydrogenase 1A1, found in Mus musculus (Mouse).